A 98-amino-acid polypeptide reads, in one-letter code: uncharacterized protein (98 aa).

This sequence belongs to the CFAP97 family.

This is an uncharacterized protein from Homo sapiens (Human).